The sequence spans 1651 residues: Protein Wiz (1651 aa).

A disordered region spans residues 1-79 (MEGSLAGSLA…TPDGRGPWEH (79 aa)). Residues Ala11, Arg14, Asn29, Gly32, Gly39, Gly42, and Glu258 each participate in a glycyl lysine isopeptide (Lys-Gly) (interchain with G-Cter in SUMO2) cross-link. C2H2-type zinc fingers lie at residues 267 to 289 (FPCIECSIYFKQKEHLLEHMSQH), 304 to 326 (LACGECGWAFADPTALEQHRQLH), and 353 to 375 (LQCPKCVFGTNSSRAYVQHAKLH). A Glycyl lysine isopeptide (Lys-Gly) (interchain with G-Cter in SUMO2) cross-link involves residue Phe313. Residues 376-399 (MREPPGQTTKEPFGGSSGAGSPSP) form a disordered region. The segment covering 386–399 (EPFGGSSGAGSPSP) has biased composition (low complexity). The segment at 416–439 (SACVFCGFPAPSESLLREHVRLVH) adopts a C2H2-type 4 zinc-finger fold. A disordered region spans residues 546-578 (LGRNKSTVHPQGLGERRRPWSEEEEEEEEEEDV). Acidic residues predominate over residues 567–578 (EEEEEEEEEEDV). C2H2-type zinc fingers lie at residues 701–723 (RKCPYCPDRFHNGIGLANHVRGH) and 769–791 (MRCDFCGAGFDTRAGLSSHARAH). Residues 819-843 (AEQPPSPLGREPGGPPGSFLTSRRP) are disordered. Residues 870–892 (TTCEVCGACFETRKGLSSHARSH) form a C2H2-type 7 zinc finger. Residues Lys883, Lys939, Lys955, Lys967, and Lys988 each participate in a glycyl lysine isopeptide (Lys-Gly) (interchain with G-Cter in SUMO2) cross-link. The tract at residues 972–1038 (FSAKGLGHPP…GPLNLTSGPE (67 aa)) is disordered. Low complexity predominate over residues 984 to 994 (PLLKKTPLALA). Ser996 is modified (phosphoserine). Position 998 is a phosphothreonine (Thr998). Residues Lys1000 and Lys1005 each participate in a glycyl lysine isopeptide (Lys-Gly) (interchain with G-Cter in SUMO2) cross-link. 4 positions are modified to phosphoserine: Ser1006, Ser1012, Ser1017, and Ser1025. An interaction with CTBP1 and CTBP2 1 region spans residues 1030 to 1034 (PLNLT). A C2H2-type 8 zinc finger spans residues 1043-1065 (IRCEFCGEFFENRKGLSSHARSH). Lys1056 is covalently cross-linked (Glycyl lysine isopeptide (Lys-Gly) (interchain with G-Cter in SUMO2)). A phosphoserine mark is found at Ser1079 and Ser1106. The interval 1091-1174 (RTQSRPGGPP…PGLAAPSLPK (84 aa)) is disordered. Over residues 1097-1106 (GGPPNPPGPS) the composition is skewed to pro residues. Glycyl lysine isopeptide (Lys-Gly) (interchain with G-Cter in SUMO2) cross-links involve residues Lys1108 and Lys1112. Residues Ser1122, Ser1127, and Ser1134 each carry the phosphoserine modification. Glycyl lysine isopeptide (Lys-Gly) (interchain with G-Cter in SUMO2) cross-links involve residues Lys1138 and Lys1139. Phosphoserine occurs at positions 1146 and 1151. Position 1162 is an N6,N6,N6-trimethyllysine; by EHMT2; alternate (Lys1162). Position 1162 is an N6,N6-dimethyllysine; by EHMT2; alternate (Lys1162). Lys1177 is covalently cross-linked (Glycyl lysine isopeptide (Lys-Gly) (interchain with G-Cter in SUMO2)). The interval 1214–1218 (PLNLS) is interaction with CTBP1 and CTBP2 2. The C2H2-type 9 zinc finger occupies 1227–1249 (IRCEFCGEFFENRKGLSSHARSH). A Glycyl lysine isopeptide (Lys-Gly) (interchain with G-Cter in SUMO2) cross-link involves residue Lys1240. Residue Ser1263 is modified to Phosphoserine. Lys1282 is covalently cross-linked (Glycyl lysine isopeptide (Lys-Gly) (interchain with G-Cter in SUMO2)). Positions 1283 to 1331 (KEPPAGDLAPALAEDGPPTVAPGPVQSPLPLSPLAGRPGKPGAGPAQVP) are disordered. A compositionally biased stretch (pro residues) spans 1301–1313 (TVAPGPVQSPLPL). Residues Ser1309 and Ser1314 each carry the phosphoserine modification. Low complexity predominate over residues 1315-1328 (PLAGRPGKPGAGPA). Residues Lys1343, Lys1356, Lys1370, Lys1372, and Lys1382 each participate in a glycyl lysine isopeptide (Lys-Gly) (interchain with G-Cter in SUMO2) cross-link. The C2H2-type 10 zinc-finger motif lies at 1397–1419 (ACCELCGLYFENRKALASHARAH). Residues Lys1448, Lys1464, and Lys1477 each participate in a glycyl lysine isopeptide (Lys-Gly) (interchain with G-Cter in SUMO2) cross-link. The interval 1463 to 1554 (TKKFRSAGHG…ASAARGGEDT (92 aa)) is disordered. Ser1480 bears the Phosphoserine mark. Residues 1481-1493 (LGLAPGGLAVVGR) show a composition bias toward low complexity. Phosphoserine is present on Ser1517. A Glycyl lysine isopeptide (Lys-Gly) (interchain with G-Cter in SUMO1); alternate cross-link involves residue Lys1523. Lys1523 is covalently cross-linked (Glycyl lysine isopeptide (Lys-Gly) (interchain with G-Cter in SUMO2); alternate). A compositionally biased stretch (basic and acidic residues) spans 1523-1541 (KAEEHQRQNINKFERRQAR). Glycyl lysine isopeptide (Lys-Gly) (interchain with G-Cter in SUMO2) cross-links involve residues Lys1534 and Lys1560. Residues 1596-1622 (LKCRFCEVEFQGPLSIQEEWVRHLQRH) form a C2H2-type 11 zinc finger. Positions 1629–1651 (SKADPPPEESQAPQAQTAAAEAP) are disordered. Lys1630 participates in a covalent cross-link: Glycyl lysine isopeptide (Lys-Gly) (interchain with G-Cter in SUMO2). The segment covering 1637-1651 (ESQAPQAQTAAAEAP) has biased composition (low complexity).

It belongs to the krueppel C2H2-type zinc-finger protein family. In terms of assembly, interacts with EHMT1, EHMT2, CTBP1 and CTBP2. Part of a complex containing at least CDYL, REST, WIZ, SETB1, EHMT1 and EHMT2.

The protein resides in the nucleus. May link EHMT1 and EHMT2 histone methyltransferases to the CTBP corepressor machinery. May be involved in EHMT1-EHMT2 heterodimer formation and stabilization. The sequence is that of Protein Wiz (WIZ) from Homo sapiens (Human).